The primary structure comprises 615 residues: MFARGSRRRRSGRAPPEAEDPDRGQPCNSCREQCPGFLLHGWRKICQHCKCPREEHAVHAVPVDLERIMCRLISDFQRHSISDDDSGCASEEYAWVPPGLKPEQVYQFFSCLPEDKVPYVNSPGEKYRIKQLLHQLPPHDSEAQYCTALEEEEKKELRAFSQQRKRENLGRGIVRIFPVTITGAICEECGKQIGGGDIAVFASRAGLGACWHPQCFVCTTCQELLVDLIYFYHVGKVYCGRHHAECLRPRCQACDEIIFSPECTEAEGRHWHMDHFCCFECEASLGGQRYVMRQSRPHCCACYEARHAEYCDGCGEHIGLDQGQMAYEGQHWHASDRCFCCSRCGRALLGRPFLPRRGLIFCSRACSLGSEPTAPGPSRRSWSAGPVTAPLAASTASFSAVKGASETTTKGTSTELAPATGPEEPSRFLRGAPHRHSMPELGLRSVPEPPPESPGQPNLRPDDSAFGRQSTPRVSFRDPLVSEGGPRRTLSAPPAQRRRPRSPPPRAPSRRRHHHHNHHHHHNRHPSRRRHYQCDAGSGSDSESCSSSPSSSSSESSEDDGFFLGERIPLPPHLCRPMPAQDTAMETFNSPSLSLPRDSRAGMPRQARDKNCIVA.

The segment covering 1–12 (MFARGSRRRRSG) has biased composition (basic residues). The interval 1–26 (MFARGSRRRRSGRAPPEAEDPDRGQP) is disordered. The PET domain occupies 74–182 (SDFQRHSISD…IVRIFPVTIT (109 aa)). 3 LIM zinc-binding domains span residues 184–249 (AICE…CLRP), 250–309 (RCQA…RHAE), and 310–373 (YCDG…SEPT). Disordered regions lie at residues 396–567 (ASFS…LGER) and 587–615 (TFNS…CIVA). Residues 405-415 (SETTTKGTSTE) are compositionally biased toward polar residues. Residues S475 and S491 each carry the phosphoserine modification. The span at 508–531 (PSRRRHHHHNHHHHHNRHPSRRRH) shows a compositional bias: basic residues. Low complexity predominate over residues 537–555 (GSGSDSESCSSSPSSSSSE). Residues 606-615 (QARDKNCIVA) show a composition bias toward basic and acidic residues.

The protein belongs to the prickle / espinas / testin family. As to quaternary structure, interacts with VANGL2 via its C-terminus. The VANGL2-dependent membrane recruitment of PRICKLE3 is a prerequisite for its polarization. Interacts with WTIP. WTIP is involved in the recruitment of PRICKLE3 to the basal body. Interacts with MT-ATP8, a component of the mitochondrial complex V. In terms of tissue distribution, widely expressed.

The protein resides in the cytoplasm. It localises to the cell membrane. Its subcellular location is the mitochondrion. Its function is as follows. Involved in the planar cell polarity (PCP) pathway that is essential for the polarization of epithelial cells during morphogenetic processes, including gastrulation and neurulation. PCP is maintained by two molecular modules, the global and the core modules, PRICKLE3 being part of the core module. Distinct complexes of the core module segregate to opposite sides of the cell, where they interact with the opposite complex in the neighboring cell at or near the adherents junctions. Involved in the organization of the basal body. Involved in cilia growth and positioning. Required for proper assembly, stability, and function of mitochondrial membrane ATP synthase (mitochondrial complex V). The chain is Prickle planar cell polarity protein 3 from Homo sapiens (Human).